The following is a 313-amino-acid chain: Homoserine O-succinyltransferase (313 aa).

C142 serves as the catalytic Acyl-thioester intermediate. 2 residues coordinate substrate: K163 and S192. H235 (proton acceptor) is an active-site residue. E237 is a catalytic residue. R249 lines the substrate pocket.

It belongs to the MetA family.

The protein localises to the cytoplasm. The catalysed reaction is L-homoserine + succinyl-CoA = O-succinyl-L-homoserine + CoA. Its pathway is amino-acid biosynthesis; L-methionine biosynthesis via de novo pathway; O-succinyl-L-homoserine from L-homoserine: step 1/1. Its function is as follows. Transfers a succinyl group from succinyl-CoA to L-homoserine, forming succinyl-L-homoserine. In Aliivibrio fischeri (strain MJ11) (Vibrio fischeri), this protein is Homoserine O-succinyltransferase.